Here is a 326-residue protein sequence, read N- to C-terminus: 4-hydroxy-3-methylbut-2-enyl diphosphate reductase (326 aa).

[4Fe-4S] cluster is bound at residue Cys22. 2 residues coordinate (2E)-4-hydroxy-3-methylbut-2-enyl diphosphate: His51 and His84. Dimethylallyl diphosphate-binding residues include His51 and His84. Positions 51 and 84 each coordinate isopentenyl diphosphate. [4Fe-4S] cluster is bound at residue Cys106. His134 is a (2E)-4-hydroxy-3-methylbut-2-enyl diphosphate binding site. His134 provides a ligand contact to dimethylallyl diphosphate. An isopentenyl diphosphate-binding site is contributed by His134. Glu136 (proton donor) is an active-site residue. Thr174 contributes to the (2E)-4-hydroxy-3-methylbut-2-enyl diphosphate binding site. Cys204 lines the [4Fe-4S] cluster pocket. Ser232, Ser233, Asn234, and Ser276 together coordinate (2E)-4-hydroxy-3-methylbut-2-enyl diphosphate. 4 residues coordinate dimethylallyl diphosphate: Ser232, Ser233, Asn234, and Ser276. Positions 232, 233, 234, and 276 each coordinate isopentenyl diphosphate.

Belongs to the IspH family. It depends on [4Fe-4S] cluster as a cofactor.

The catalysed reaction is isopentenyl diphosphate + 2 oxidized [2Fe-2S]-[ferredoxin] + H2O = (2E)-4-hydroxy-3-methylbut-2-enyl diphosphate + 2 reduced [2Fe-2S]-[ferredoxin] + 2 H(+). It catalyses the reaction dimethylallyl diphosphate + 2 oxidized [2Fe-2S]-[ferredoxin] + H2O = (2E)-4-hydroxy-3-methylbut-2-enyl diphosphate + 2 reduced [2Fe-2S]-[ferredoxin] + 2 H(+). It participates in isoprenoid biosynthesis; dimethylallyl diphosphate biosynthesis; dimethylallyl diphosphate from (2E)-4-hydroxy-3-methylbutenyl diphosphate: step 1/1. Its pathway is isoprenoid biosynthesis; isopentenyl diphosphate biosynthesis via DXP pathway; isopentenyl diphosphate from 1-deoxy-D-xylulose 5-phosphate: step 6/6. Catalyzes the conversion of 1-hydroxy-2-methyl-2-(E)-butenyl 4-diphosphate (HMBPP) into a mixture of isopentenyl diphosphate (IPP) and dimethylallyl diphosphate (DMAPP). Acts in the terminal step of the DOXP/MEP pathway for isoprenoid precursor biosynthesis. This Bordetella bronchiseptica (strain ATCC BAA-588 / NCTC 13252 / RB50) (Alcaligenes bronchisepticus) protein is 4-hydroxy-3-methylbut-2-enyl diphosphate reductase.